Reading from the N-terminus, the 120-residue chain is Chaperonin GroEL (120 aa).

23–27 serves as a coordination point for ATP; it reads DGTTT.

It belongs to the chaperonin (HSP60) family. As to quaternary structure, forms a cylinder of 14 subunits composed of two heptameric rings stacked back-to-back. Interacts with the co-chaperonin GroES.

The protein resides in the cytoplasm. It carries out the reaction ATP + H2O + a folded polypeptide = ADP + phosphate + an unfolded polypeptide.. Its function is as follows. Together with its co-chaperonin GroES, plays an essential role in assisting protein folding. The GroEL-GroES system forms a nano-cage that allows encapsulation of the non-native substrate proteins and provides a physical environment optimized to promote and accelerate protein folding. This Mycolicibacterium chitae (Mycobacterium chitae) protein is Chaperonin GroEL.